Reading from the N-terminus, the 213-residue chain is Probable transaldolase (213 aa).

The active-site Schiff-base intermediate with substrate is Lys83.

Belongs to the transaldolase family. Type 3B subfamily.

The protein resides in the cytoplasm. It catalyses the reaction D-sedoheptulose 7-phosphate + D-glyceraldehyde 3-phosphate = D-erythrose 4-phosphate + beta-D-fructose 6-phosphate. It participates in carbohydrate degradation; pentose phosphate pathway; D-glyceraldehyde 3-phosphate and beta-D-fructose 6-phosphate from D-ribose 5-phosphate and D-xylulose 5-phosphate (non-oxidative stage): step 2/3. Functionally, transaldolase is important for the balance of metabolites in the pentose-phosphate pathway. This is Probable transaldolase from Oceanobacillus iheyensis (strain DSM 14371 / CIP 107618 / JCM 11309 / KCTC 3954 / HTE831).